We begin with the raw amino-acid sequence, 199 residues long: MAP6 domain-containing protein 1 (199 aa).

S-palmitoyl cysteine attachment occurs at residues cysteine 5, cysteine 10, and cysteine 11. Residues tyrosine 33–proline 110 form a disordered region. At serine 38 the chain carries Phosphoserine. 2 mn regions span residues threonine 130 to valine 143 and aspartate 165 to valine 177. Position 167 is a phosphoserine (serine 167).

The protein belongs to the STOP family. As to quaternary structure, interacts with calmodulin. In terms of processing, palmitoylated. Palmitoylation enhances association with microtubules.

Its subcellular location is the golgi apparatus. It is found in the cytoplasm. It localises to the cytoskeleton. May have microtubule-stabilizing activity. The protein is MAP6 domain-containing protein 1 (MAP6D1) of Homo sapiens (Human).